The chain runs to 509 residues: 2,3-bisphosphoglycerate-independent phosphoglycerate mutase (509 aa).

Asp14 and Ser64 together coordinate Mn(2+). Catalysis depends on Ser64, which acts as the Phosphoserine intermediate. Residues His125, 155 to 156, Arg187, Arg193, 259 to 262, and Lys332 contribute to the substrate site; these read RD and RADR. Mn(2+) contacts are provided by Asp399, His403, Asp440, His441, and His459.

Belongs to the BPG-independent phosphoglycerate mutase family. In terms of assembly, monomer. It depends on Mn(2+) as a cofactor.

The enzyme catalyses (2R)-2-phosphoglycerate = (2R)-3-phosphoglycerate. It functions in the pathway carbohydrate degradation; glycolysis; pyruvate from D-glyceraldehyde 3-phosphate: step 3/5. In terms of biological role, catalyzes the interconversion of 2-phosphoglycerate and 3-phosphoglycerate. The sequence is that of 2,3-bisphosphoglycerate-independent phosphoglycerate mutase from Aeromonas salmonicida (strain A449).